The following is an 88-amino-acid chain: Exodeoxyribonuclease 7 small subunit (88 aa).

The segment at 69–88 (ALAEEADPEDGASGADGGGA) is disordered.

The protein belongs to the XseB family. Heterooligomer composed of large and small subunits.

It localises to the cytoplasm. The catalysed reaction is Exonucleolytic cleavage in either 5'- to 3'- or 3'- to 5'-direction to yield nucleoside 5'-phosphates.. Functionally, bidirectionally degrades single-stranded DNA into large acid-insoluble oligonucleotides, which are then degraded further into small acid-soluble oligonucleotides. This chain is Exodeoxyribonuclease 7 small subunit, found in Streptomyces coelicolor (strain ATCC BAA-471 / A3(2) / M145).